We begin with the raw amino-acid sequence, 190 residues long: dCTP deaminase (190 aa).

Residue 113 to 118 (KSTYAR) coordinates dCTP. Glu139 functions as the Proton donor/acceptor in the catalytic mechanism. Residues Gln158, Tyr172, Lys181, and Gln182 each coordinate dCTP.

Belongs to the dCTP deaminase family. Homotrimer.

The catalysed reaction is dCTP + H2O + H(+) = dUTP + NH4(+). The protein operates within pyrimidine metabolism; dUMP biosynthesis; dUMP from dCTP (dUTP route): step 1/2. In terms of biological role, catalyzes the deamination of dCTP to dUTP. The polypeptide is dCTP deaminase (Chlamydia trachomatis serovar L2 (strain ATCC VR-902B / DSM 19102 / 434/Bu)).